Here is a 436-residue protein sequence, read N- to C-terminus: Glutamyl-tRNA reductase (436 aa).

Substrate-binding positions include T50–R53, S110, E115–Q117, and Q121. The Nucleophile role is filled by C51. An NADP(+)-binding site is contributed by G190 to S195.

It belongs to the glutamyl-tRNA reductase family. In terms of assembly, homodimer.

It catalyses the reaction (S)-4-amino-5-oxopentanoate + tRNA(Glu) + NADP(+) = L-glutamyl-tRNA(Glu) + NADPH + H(+). Its pathway is porphyrin-containing compound metabolism; protoporphyrin-IX biosynthesis; 5-aminolevulinate from L-glutamyl-tRNA(Glu): step 1/2. Its function is as follows. Catalyzes the NADPH-dependent reduction of glutamyl-tRNA(Glu) to glutamate 1-semialdehyde (GSA). The chain is Glutamyl-tRNA reductase from Wolinella succinogenes (strain ATCC 29543 / DSM 1740 / CCUG 13145 / JCM 31913 / LMG 7466 / NCTC 11488 / FDC 602W) (Vibrio succinogenes).